A 346-amino-acid chain; its full sequence is Methylthioribose-1-phosphate isomerase (346 aa).

Residues 46 to 48 (RGA), R89, and Q196 each bind substrate. Residue D237 is the Proton donor of the active site. 247 to 248 (NK) serves as a coordination point for substrate.

The protein belongs to the eIF-2B alpha/beta/delta subunits family. MtnA subfamily.

The catalysed reaction is 5-(methylsulfanyl)-alpha-D-ribose 1-phosphate = 5-(methylsulfanyl)-D-ribulose 1-phosphate. Its pathway is amino-acid biosynthesis; L-methionine biosynthesis via salvage pathway; L-methionine from S-methyl-5-thio-alpha-D-ribose 1-phosphate: step 1/6. Functionally, catalyzes the interconversion of methylthioribose-1-phosphate (MTR-1-P) into methylthioribulose-1-phosphate (MTRu-1-P). The sequence is that of Methylthioribose-1-phosphate isomerase from Geotalea daltonii (strain DSM 22248 / JCM 15807 / FRC-32) (Geobacter daltonii).